The sequence spans 318 residues: Pantothenate kinase (318 aa).

Residue 96–103 (GSVAVGKS) coordinates ATP.

The protein belongs to the prokaryotic pantothenate kinase family.

Its subcellular location is the cytoplasm. It carries out the reaction (R)-pantothenate + ATP = (R)-4'-phosphopantothenate + ADP + H(+). It functions in the pathway cofactor biosynthesis; coenzyme A biosynthesis; CoA from (R)-pantothenate: step 1/5. In Rhodopseudomonas palustris (strain HaA2), this protein is Pantothenate kinase.